The sequence spans 430 residues: Long-chain specific acyl-CoA dehydrogenase, mitochondrial (430 aa).

A mitochondrion-targeting transit peptide spans 1–30 (MAARLLLRSLRVLSARSATLPPPSARCSHS). At Lys42 the chain carries N6-acetyllysine. Phosphoserine is present on residues Ser54 and Ser55. N6-acetyllysine; alternate is present on residues Lys66 and Lys81. N6-succinyllysine; alternate is present on residues Lys66 and Lys81. Residues Lys92 and Lys95 each carry the N6-acetyllysine modification. N6-succinyllysine is present on Lys165. 170–179 (IAMTEPGAGS) contacts FAD. Ser179 is a substrate binding site. Ser191 is subject to Phosphoserine. Position 203–205 (203–205 (FIT)) interacts with FAD. A substrate-binding site is contributed by 227–228 (AH). Position 240 is an N6-succinyllysine (Lys240). An N6-acetyllysine; alternate mark is found at Lys254 and Lys279. N6-succinyllysine; alternate occurs at positions 254 and 279. Substrate contacts are provided by residues Tyr282 and 289–292 (PQER). Catalysis depends on Glu291, which acts as the Proton acceptor. Arg317 contributes to the FAD binding site. N6-acetyllysine is present on Lys318. Lys322 bears the N6-acetyllysine; alternate mark. Residue Lys322 is modified to N6-succinyllysine; alternate. Residue Gln328 participates in FAD binding. Residue Lys358 is modified to N6-acetyllysine. Phosphoserine is present on Ser362. 385-389 (QLHGG) serves as a coordination point for FAD. Substrate is bound at residue 412–413 (GG). Residue 414-416 (TNE) participates in FAD binding.

This sequence belongs to the acyl-CoA dehydrogenase family. As to quaternary structure, homotetramer. FAD is required as a cofactor. Post-translationally, acetylation at Lys-318 and Lys-322 in proximity of the cofactor-binding sites strongly reduces catalytic activity. These sites are deacetylated by SIRT3.

It is found in the mitochondrion matrix. The catalysed reaction is a long-chain 2,3-saturated fatty acyl-CoA + oxidized [electron-transfer flavoprotein] + H(+) = a long-chain (2E)-enoyl-CoA + reduced [electron-transfer flavoprotein]. It carries out the reaction octanoyl-CoA + oxidized [electron-transfer flavoprotein] + H(+) = (2E)-octenoyl-CoA + reduced [electron-transfer flavoprotein]. The enzyme catalyses decanoyl-CoA + oxidized [electron-transfer flavoprotein] + H(+) = (2E)-decenoyl-CoA + reduced [electron-transfer flavoprotein]. It catalyses the reaction dodecanoyl-CoA + oxidized [electron-transfer flavoprotein] + H(+) = (2E)-dodecenoyl-CoA + reduced [electron-transfer flavoprotein]. The catalysed reaction is tetradecanoyl-CoA + oxidized [electron-transfer flavoprotein] + H(+) = (2E)-tetradecenoyl-CoA + reduced [electron-transfer flavoprotein]. It carries out the reaction oxidized [electron-transfer flavoprotein] + hexadecanoyl-CoA + H(+) = (2E)-hexadecenoyl-CoA + reduced [electron-transfer flavoprotein]. The enzyme catalyses octadecanoyl-CoA + oxidized [electron-transfer flavoprotein] + H(+) = (2E)-octadecenoyl-CoA + reduced [electron-transfer flavoprotein]. It catalyses the reaction (5E)-tetradecenoyl-CoA + oxidized [electron-transfer flavoprotein] + H(+) = (2E,5E)-tetradecadienoyl-CoA + reduced [electron-transfer flavoprotein]. The catalysed reaction is (5Z)-tetradecenoyl-CoA + oxidized [electron-transfer flavoprotein] + H(+) = (2E,5Z)-tetradecadienoyl-CoA + reduced [electron-transfer flavoprotein]. It carries out the reaction oxidized [electron-transfer flavoprotein] + (9Z)-octadecenoyl-CoA + H(+) = (2E,9Z)-octadecadienoyl-CoA + reduced [electron-transfer flavoprotein]. The enzyme catalyses hexanoyl-CoA + oxidized [electron-transfer flavoprotein] + H(+) = (2E)-hexenoyl-CoA + reduced [electron-transfer flavoprotein]. It catalyses the reaction eicosanoyl-CoA + oxidized [electron-transfer flavoprotein] + H(+) = (2E)-eicosenoyl-CoA + reduced [electron-transfer flavoprotein]. The catalysed reaction is docosanoyl-CoA + oxidized [electron-transfer flavoprotein] + H(+) = (2E)-docosenoyl-CoA + reduced [electron-transfer flavoprotein]. It carries out the reaction tetracosanoyl-CoA + oxidized [electron-transfer flavoprotein] + H(+) = (2E)-tetracosenoyl-CoA + reduced [electron-transfer flavoprotein]. Its pathway is lipid metabolism; mitochondrial fatty acid beta-oxidation. Inhibited by crotonyl-CoA, 2-octenoyl-CoA and 2-hexadecenoyl-CoA. Long-chain specific acyl-CoA dehydrogenase is one of the acyl-CoA dehydrogenases that catalyze the first step of mitochondrial fatty acid beta-oxidation, an aerobic process breaking down fatty acids into acetyl-CoA and allowing the production of energy from fats. The first step of fatty acid beta-oxidation consists in the removal of one hydrogen from C-2 and C-3 of the straight-chain fatty acyl-CoA thioester, resulting in the formation of trans-2-enoyl-CoA. Among the different mitochondrial acyl-CoA dehydrogenases, long-chain specific acyl-CoA dehydrogenase can act on saturated and unsaturated acyl-CoAs with 6 to 24 carbons with a preference for 8 to 18 carbons long primary chains. This is Long-chain specific acyl-CoA dehydrogenase, mitochondrial from Rattus norvegicus (Rat).